The following is a 697-amino-acid chain: Gametogenetin-binding protein 2 (697 aa).

Position 360 is a phosphoserine (serine 360).

As to quaternary structure, interacts with GGN. As to expression, expressed in heart, brain, placenta, lung, liver, skeletal muscle, kidney and pancreas. Expressed more abundantly in heart, pancreas and skeletal muscle.

Its subcellular location is the cytoplasmic vesicle. Its function is as follows. May be involved in spermatogenesis. This is Gametogenetin-binding protein 2 (GGNBP2) from Homo sapiens (Human).